Consider the following 83-residue polypeptide: Defensin-like protein 47 (83 aa).

Positions 1–27 (MGSTKTLVTCFLVIILAVSLPNNNVLA) are cleaved as a signal peptide. Intrachain disulfides connect cysteine 40/cysteine 81, cysteine 44/cysteine 68, cysteine 53/cysteine 79, and cysteine 57/cysteine 80.

Belongs to the DEFL family.

It localises to the secreted. This chain is Defensin-like protein 47, found in Arabidopsis thaliana (Mouse-ear cress).